The following is a 233-amino-acid chain: Adenosine 5'-phosphosulfate reductase (233 aa).

4 residues coordinate [4Fe-4S] cluster: Cys-120, Cys-121, Cys-203, and Cys-206. The active-site Nucleophile; cysteine thiosulfonate intermediate is Cys-229.

It belongs to the PAPS reductase family. CysH subfamily. [4Fe-4S] cluster serves as cofactor.

It is found in the cytoplasm. It catalyses the reaction [thioredoxin]-disulfide + sulfite + AMP + 2 H(+) = adenosine 5'-phosphosulfate + [thioredoxin]-dithiol. The protein operates within sulfur metabolism; hydrogen sulfide biosynthesis; sulfite from sulfate. In terms of biological role, catalyzes the formation of sulfite from adenosine 5'-phosphosulfate (APS) using thioredoxin as an electron donor. The polypeptide is Adenosine 5'-phosphosulfate reductase (Bacillus velezensis (strain DSM 23117 / BGSC 10A6 / LMG 26770 / FZB42) (Bacillus amyloliquefaciens subsp. plantarum)).